Reading from the N-terminus, the 156-residue chain is Small ribosomal subunit protein uS7 (156 aa).

This sequence belongs to the universal ribosomal protein uS7 family. In terms of assembly, part of the 30S ribosomal subunit. Contacts proteins S9 and S11.

Functionally, one of the primary rRNA binding proteins, it binds directly to 16S rRNA where it nucleates assembly of the head domain of the 30S subunit. Is located at the subunit interface close to the decoding center, probably blocks exit of the E-site tRNA. In Latilactobacillus sakei subsp. sakei (strain 23K) (Lactobacillus sakei subsp. sakei), this protein is Small ribosomal subunit protein uS7.